The chain runs to 546 residues: Light-independent protochlorophyllide reductase subunit B (546 aa).

Aspartate 36 is a binding site for [4Fe-4S] cluster. The active-site Proton donor is aspartate 287. 422-423 serves as a coordination point for substrate; the sequence is GL. Positions 443-501 are disordered; that stretch reads PSHLSAHRPTGEAVGDAVGEPPAAPRDQAAPAATLDGSAAQSDPARTTPPGAPSWEDSA.

Belongs to the ChlB/BchB/BchZ family. In terms of assembly, protochlorophyllide reductase is composed of three subunits; BchL, BchN and BchB. Forms a heterotetramer of two BchB and two BchN subunits. [4Fe-4S] cluster serves as cofactor.

The catalysed reaction is chlorophyllide a + oxidized 2[4Fe-4S]-[ferredoxin] + 2 ADP + 2 phosphate = protochlorophyllide a + reduced 2[4Fe-4S]-[ferredoxin] + 2 ATP + 2 H2O. It functions in the pathway porphyrin-containing compound metabolism; bacteriochlorophyll biosynthesis (light-independent). Its function is as follows. Component of the dark-operative protochlorophyllide reductase (DPOR) that uses Mg-ATP and reduced ferredoxin to reduce ring D of protochlorophyllide (Pchlide) to form chlorophyllide a (Chlide). This reaction is light-independent. The NB-protein (BchN-BchB) is the catalytic component of the complex. The protein is Light-independent protochlorophyllide reductase subunit B of Rhodospirillum rubrum (strain ATCC 11170 / ATH 1.1.1 / DSM 467 / LMG 4362 / NCIMB 8255 / S1).